Consider the following 40-residue polypeptide: RNA replication protein (40 aa).

It belongs to the potexviruses/carlaviruses RNA replication protein family.

The enzyme catalyses RNA(n) + a ribonucleoside 5'-triphosphate = RNA(n+1) + diphosphate. It catalyses the reaction ATP + H2O = ADP + phosphate + H(+). Functionally, RNA replication. The central part of this protein possibly functions as an ATP-binding helicase. This chain is RNA replication protein, found in Lily symptomless virus (LSV).